We begin with the raw amino-acid sequence, 273 residues long: 3-keto-5-aminohexanoate cleavage enzyme (273 aa).

E14 is a (5S)-5-amino-3-oxohexanoate binding site. The Zn(2+) site is built by H46 and H48. (5S)-5-amino-3-oxohexanoate-binding residues include S82, G85, and S106. Residue E227 participates in Zn(2+) binding.

It belongs to the BKACE family. Kce subfamily. As to quaternary structure, homotetramer. Requires Zn(2+) as cofactor.

It catalyses the reaction (5S)-5-amino-3-oxohexanoate + acetyl-CoA = (3S)-3-aminobutanoyl-CoA + acetoacetate. It participates in amino-acid degradation; L-lysine degradation via acetate pathway. In terms of biological role, involved in the anaerobic fermentation of lysine. Catalyzes the reversible reaction between 3-keto-5-aminohexanoate (KAH) and acetyl-CoA to form 3-aminobutyryl-CoA and acetoacetate. The reaction involves the deprotonation of KAH, the nucleophilic addition onto acetyl-CoA and the intramolecular transfer of the CoA moiety. The sequence is that of 3-keto-5-aminohexanoate cleavage enzyme from Acetoanaerobium sticklandii (strain ATCC 12662 / DSM 519 / JCM 1433 / CCUG 9281 / NCIMB 10654 / HF) (Clostridium sticklandii).